A 176-amino-acid polypeptide reads, in one-letter code: Lipoprotein signal peptidase (176 aa).

4 consecutive transmembrane segments (helical) span residues 26–46, 60–80, 82–102, and 107–127; these read LWMAFALLVVVLDQFFKIVIV, FFNLVLVYNKGAAFSFLADAG, WQRWFFTGLGLVVGAFIVWLL, and GQKLFCFAVSLILGGAVGNVV. Catalysis depends on residues D137 and D155. A helical membrane pass occupies residues 147 to 167; the sequence is HWPAFNVADCAITVGAVLLIV.

This sequence belongs to the peptidase A8 family.

It localises to the cell inner membrane. The catalysed reaction is Release of signal peptides from bacterial membrane prolipoproteins. Hydrolyzes -Xaa-Yaa-Zaa-|-(S,diacylglyceryl)Cys-, in which Xaa is hydrophobic (preferably Leu), and Yaa (Ala or Ser) and Zaa (Gly or Ala) have small, neutral side chains.. It functions in the pathway protein modification; lipoprotein biosynthesis (signal peptide cleavage). Its function is as follows. This protein specifically catalyzes the removal of signal peptides from prolipoproteins. This Cupriavidus pinatubonensis (strain JMP 134 / LMG 1197) (Cupriavidus necator (strain JMP 134)) protein is Lipoprotein signal peptidase.